A 231-amino-acid polypeptide reads, in one-letter code: Orotidine 5'-phosphate decarboxylase (231 aa).

Residues D9, K34, 62–71 (DLKLHDIPSV), T117, R179, Q188, G208, and R209 contribute to the substrate site. The Proton donor role is filled by K64.

Belongs to the OMP decarboxylase family. Type 1 subfamily. In terms of assembly, homodimer.

It catalyses the reaction orotidine 5'-phosphate + H(+) = UMP + CO2. It participates in pyrimidine metabolism; UMP biosynthesis via de novo pathway; UMP from orotate: step 2/2. Its function is as follows. Catalyzes the decarboxylation of orotidine 5'-monophosphate (OMP) to uridine 5'-monophosphate (UMP). This is Orotidine 5'-phosphate decarboxylase from Aquifex aeolicus (strain VF5).